The sequence spans 90 residues: Probable Fe(2+)-trafficking protein (90 aa).

This sequence belongs to the Fe(2+)-trafficking protein family.

Its function is as follows. Could be a mediator in iron transactions between iron acquisition and iron-requiring processes, such as synthesis and/or repair of Fe-S clusters in biosynthetic enzymes. This is Probable Fe(2+)-trafficking protein from Haemophilus influenzae (strain PittEE).